A 199-amino-acid polypeptide reads, in one-letter code: Pyridoxal 5'-phosphate synthase subunit PdxT (199 aa).

47-49 (GES) contacts L-glutamine. Catalysis depends on cysteine 79, which acts as the Nucleophile. Residues arginine 106 and 133 to 134 (IR) contribute to the L-glutamine site. Catalysis depends on charge relay system residues histidine 169 and glutamate 171.

Belongs to the glutaminase PdxT/SNO family. As to quaternary structure, in the presence of PdxS, forms a dodecamer of heterodimers. Only shows activity in the heterodimer.

The enzyme catalyses aldehydo-D-ribose 5-phosphate + D-glyceraldehyde 3-phosphate + L-glutamine = pyridoxal 5'-phosphate + L-glutamate + phosphate + 3 H2O + H(+). It catalyses the reaction L-glutamine + H2O = L-glutamate + NH4(+). The protein operates within cofactor biosynthesis; pyridoxal 5'-phosphate biosynthesis. Catalyzes the hydrolysis of glutamine to glutamate and ammonia as part of the biosynthesis of pyridoxal 5'-phosphate. The resulting ammonia molecule is channeled to the active site of PdxS. In Desulfitobacterium hafniense (strain Y51), this protein is Pyridoxal 5'-phosphate synthase subunit PdxT.